Consider the following 1653-residue polypeptide: Protein TOPAZ1 (1653 aa).

Disordered regions lie at residues 1 to 88 (MPRA…PGID), 212 to 238 (GCMH…TDPS), 553 to 591 (KMKS…KKDR), 855 to 893 (PNVA…GSMK), and 919 to 942 (EVTH…SSDL). 2 stretches are compositionally biased toward basic and acidic residues: residues 58–69 (SGREEVESDKSA) and 221–236 (SKSK…DKTD). Polar residues predominate over residues 561–585 (RSASEVVSNTTEDTSLTNMTHNLTG). Composition is skewed to basic and acidic residues over residues 858-877 (AEEH…KKEP) and 920-942 (VTHE…SSDL).

Its subcellular location is the cytoplasm. The protein resides in the cytosol. In terms of biological role, important for normal spermatogenesis and male fertility. Specifically required for progression to the post-meiotic stages of spermatocyte development. Seems to be necessary for normal expression levels of a number of testis-expressed gene transcripts, although its role in this process is unclear. The protein is Protein TOPAZ1 (TOPAZ1) of Bos taurus (Bovine).